Here is a 62-residue protein sequence, read N- to C-terminus: Defensin-like protein A (62 aa).

The first 26 residues, 1–26 (MRCVVLFMVSCLLIVLLINHFEEVEA), serve as a signal peptide directing secretion. Cysteine 42 and cysteine 52 are disulfide-bonded.

The protein belongs to the DEFL family.

The protein localises to the secreted. Its function is as follows. Truncated and inactivated form of SCRA, a protein involved in male-mediated self-incompatibility when active. Most A.thaliana cultivars contain such an inactive form and thus, are self-fertiles. The sequence is that of Defensin-like protein A (SCRA) from Arabidopsis thaliana (Mouse-ear cress).